The sequence spans 114 residues: RutC family protein YoaB (114 aa).

This sequence belongs to the RutC family.

This chain is RutC family protein YoaB (yoaB), found in Escherichia coli O6:H1 (strain CFT073 / ATCC 700928 / UPEC).